Here is a 416-residue protein sequence, read N- to C-terminus: Heat shock protein DDB_G0280215 (416 aa).

A sHSP domain is found at 37–150; that stretch reads SMDWGWKPRM…SQHISLFGRE (114 aa). A disordered region spans residues 216–235; sequence ETKERERRIRDTKGETEKKK.

Belongs to the small heat shock protein (HSP20) family.

The polypeptide is Heat shock protein DDB_G0280215 (Dictyostelium discoideum (Social amoeba)).